A 273-amino-acid chain; its full sequence is Ribosomal RNA small subunit methyltransferase A (273 aa).

S-adenosyl-L-methionine-binding residues include asparagine 18, leucine 20, glycine 45, glutamate 66, aspartate 91, and asparagine 113.

The protein belongs to the class I-like SAM-binding methyltransferase superfamily. rRNA adenine N(6)-methyltransferase family. RsmA subfamily.

The protein localises to the cytoplasm. The enzyme catalyses adenosine(1518)/adenosine(1519) in 16S rRNA + 4 S-adenosyl-L-methionine = N(6)-dimethyladenosine(1518)/N(6)-dimethyladenosine(1519) in 16S rRNA + 4 S-adenosyl-L-homocysteine + 4 H(+). Functionally, specifically dimethylates two adjacent adenosines (A1518 and A1519) in the loop of a conserved hairpin near the 3'-end of 16S rRNA in the 30S particle. May play a critical role in biogenesis of 30S subunits. The sequence is that of Ribosomal RNA small subunit methyltransferase A from Escherichia coli (strain SE11).